The sequence spans 349 residues: D-alanine--D-alanine ligase (349 aa).

Residues 132 to 335 enclose the ATP-grasp domain; sequence KHVFEAVGVP…YSDLIEKLVD (204 aa). 162–217 contributes to the ATP binding site; that stretch reads VEKLEFPVFVKPANMGSSVGISKVDDLADLQPALSEAYKYDNRVVIEQGVDAREIE. Mg(2+) is bound by residues aspartate 289, glutamate 302, and asparagine 304.

The protein belongs to the D-alanine--D-alanine ligase family. Requires Mg(2+) as cofactor. The cofactor is Mn(2+).

It is found in the cytoplasm. It catalyses the reaction 2 D-alanine + ATP = D-alanyl-D-alanine + ADP + phosphate + H(+). It functions in the pathway cell wall biogenesis; peptidoglycan biosynthesis. In terms of biological role, cell wall formation. The chain is D-alanine--D-alanine ligase from Lactococcus lactis subsp. lactis (strain IL1403) (Streptococcus lactis).